Here is a 271-residue protein sequence, read N- to C-terminus: Phosphatidylglycerol--prolipoprotein diacylglyceryl transferase (271 aa).

A run of 4 helical transmembrane segments spans residues Trp-25 to Val-45, Tyr-60 to Tyr-80, Phe-103 to Leu-123, and Ala-131 to Gly-151. Arg-152 provides a ligand contact to a 1,2-diacyl-sn-glycero-3-phospho-(1'-sn-glycerol). The next 3 helical transmembrane spans lie at Pro-181 to Ala-201, Gly-209 to Tyr-229, and Gly-235 to Ile-255.

The protein belongs to the Lgt family.

The protein localises to the cell inner membrane. It catalyses the reaction L-cysteinyl-[prolipoprotein] + a 1,2-diacyl-sn-glycero-3-phospho-(1'-sn-glycerol) = an S-1,2-diacyl-sn-glyceryl-L-cysteinyl-[prolipoprotein] + sn-glycerol 1-phosphate + H(+). The protein operates within protein modification; lipoprotein biosynthesis (diacylglyceryl transfer). Functionally, catalyzes the transfer of the diacylglyceryl group from phosphatidylglycerol to the sulfhydryl group of the N-terminal cysteine of a prolipoprotein, the first step in the formation of mature lipoproteins. This Campylobacter jejuni (strain RM1221) protein is Phosphatidylglycerol--prolipoprotein diacylglyceryl transferase.